Consider the following 238-residue polypeptide: Lactate utilization protein A (238 aa).

The protein belongs to the LutA/YkgE family.

Functionally, is essential for L-lactate degradation and allows cells to grow with lactate as the sole carbon source. May also allow cells to utilize an alternative carbon source during biofilm formation, since it contributes to the formation of architecturally complex communities when lactate is present. The protein is Lactate utilization protein A (lutA) of Bacillus subtilis (strain 168).